The sequence spans 142 residues: Hemoglobin subunit alpha (142 aa).

Position 1 is an N-acetylserine (Ser-1). In terms of domain architecture, Globin spans 1–142 (SLSDKDKADV…LALALGQKYR (142 aa)). His-58 lines the O2 pocket. His-88 lines the heme b pocket.

Belongs to the globin family. In terms of assembly, heterotetramer of two alpha chains and two beta chains. Red blood cells.

Functionally, involved in oxygen transport from gills to the various peripheral tissues. The sequence is that of Hemoglobin subunit alpha (hba) from Catostomus clarkii (Desert sucker).